Here is a 23-residue protein sequence, read N- to C-terminus: Magainin-BM2 (23 aa).

Expressed by the skin glands.

It is found in the secreted. Its function is as follows. Antimicrobial peptide. This is Magainin-BM2 from Xenopus boumbaensis (Mawa clawed frog).